Consider the following 317-residue polypeptide: UAP56-interacting factor (317 aa).

The residue at position 1 (methionine 1) is an N-acetylmethionine. The interval 1–26 (MNRFGTRLVGATATPPPPPKARSNEN) is disordered. The residue at position 14 (threonine 14) is a Phosphothreonine. A Phosphoserine modification is found at serine 23. A UAP56-binding motif motif is present at residues 26–44 (NLDKIDMSLDDIIKLNRKE). Serine 60 and serine 117 each carry phosphoserine. Lysine 139 participates in a covalent cross-link: Glycyl lysine isopeptide (Lys-Gly) (interchain with G-Cter in SUMO1). Lysine 260 participates in a covalent cross-link: Glycyl lysine isopeptide (Lys-Gly) (interchain with G-Cter in SUMO2).

Belongs to the UIF family. As to quaternary structure, interacts with DDX39B/UAP56 and NXF1; interaction with DDX39B/UAP56 and NXF1 are mutually exclusive. Interacts with SSRP1; required for its recruitment to mRNAs. Interacts with CHTOP.

It localises to the nucleus. The protein resides in the nucleoplasm. The protein localises to the nucleus speckle. Required for mRNA export from the nucleus to the cytoplasm. Acts as an adapter that uses the DDX39B/UAP56-NFX1 pathway to ensure efficient mRNA export and delivering to the nuclear pore. Associates with spliced and unspliced mRNAs simultaneously with ALYREF/THOC4. The polypeptide is UAP56-interacting factor (Fyttd1) (Mus musculus (Mouse)).